The following is a 795-amino-acid chain: MMPLKKRQRQTLVCSNCKRRKSRCDRGKPACGNCIRLGNRETCHYFISPSEKGGDGGDSPGESAGSNGALERWQFVRAHSCGRVDLTAGRTVVFGKRSAVYVAGVLSTDAVRYRDLYLELLSVFSHAAIKKTVSQLHAQAQVGAQEASLPNSVKRVIRMEDEGMLQESSPYILAKHKKVHQSLVDGFAQSRYEGRQQFADVEEAAKQHLVERYIFLQKVLPAFKKHVLPLIPIYDERMLCVTVEQLYDDYQKRGKFSAKNGDLITVATILLITRLVYLAIRFDKCSVVNVKYNRILELDTEPYAALAYELLPRDKLLRKVTLPQLQCLILLRFHNWCSPMDGDGESLQYSNVLMGTIYACCKEIGASWLSFKEPDKYDFAKARGSNSRFTMAFAEMEPGEVDSANESVVKLYQQIWAVVLHWDRNVSMLTGLEPIIGTSMKPAAMSSYNNWYADMISLDYLKWQLLTRINEDPSEVNLEEVKPIISEIRQRLGQFTSESELAFEQELILQLVELSILHAAFIGPTSNVSAAEHRKNYQELLERIIHLSGIFITYFHDPPTTNHQYGRFYTNKIVEVAMYRVYQILTGLILRISSACQDQSLKPTLMKFYKNLCSLYFNELGYDYYQVFKRLFEAKVKYKILEQTANPVFIMLRYLFAEIQSGNMESMKSQELIGLIYGEYKKMGGELNLDMMDLWNHIVPTQCDHNIGLNSLFTTEIFPTDQYSDYNLFVSFYDYASNKLTEDTNQAAEKSIAHNPSTSIHDLCKGGASPHFDLLEGILDPLDFMTYLDSIPGET.

Residues 14-43 (CSNCKRRKSRCDRGKPACGNCIRLGNRETC) constitute a DNA-binding region (zn(2)-C6 fungal-type).

It belongs to the OAF3 family.

It localises to the cytoplasm. It is found in the nucleus. The protein localises to the mitochondrion. Transcriptional inhibitor with a significantly increased number of target genes in response to oleate. The sequence is that of Oleate activated transcription factor 3 (OAF3) from Eremothecium gossypii (strain ATCC 10895 / CBS 109.51 / FGSC 9923 / NRRL Y-1056) (Yeast).